The primary structure comprises 439 residues: Xylose isomerase (439 aa).

Residues histidine 101 and aspartate 104 contribute to the active site. Positions 232, 268, 271, 296, 307, 309, and 339 each coordinate Mg(2+).

The protein belongs to the xylose isomerase family. Homotetramer. It depends on Mg(2+) as a cofactor.

The protein resides in the cytoplasm. It carries out the reaction alpha-D-xylose = alpha-D-xylulofuranose. This Pectobacterium atrosepticum (strain SCRI 1043 / ATCC BAA-672) (Erwinia carotovora subsp. atroseptica) protein is Xylose isomerase.